Consider the following 171-residue polypeptide: Serine acetyltransferase (171 aa).

It belongs to the transferase hexapeptide repeat family.

It is found in the cytoplasm. The catalysed reaction is L-serine + acetyl-CoA = O-acetyl-L-serine + CoA. It participates in amino-acid biosynthesis; L-cysteine biosynthesis; L-cysteine from L-serine: step 1/2. In Helicobacter pylori (strain ATCC 700392 / 26695) (Campylobacter pylori), this protein is Serine acetyltransferase (cysE).